A 505-amino-acid polypeptide reads, in one-letter code: Ribose import ATP-binding protein RbsA (505 aa).

ABC transporter domains are found at residues 12–249 (LQMK…VGRK) and 259–504 (VKKG…VAFS). Residue 44–51 (GENGAGKS) coordinates ATP.

The protein belongs to the ABC transporter superfamily. Ribose importer (TC 3.A.1.2.1) family. In terms of assembly, the complex is composed of an ATP-binding protein (RbsA), two transmembrane proteins (RbsC) and a solute-binding protein (RbsB).

It localises to the cell membrane. The enzyme catalyses D-ribose(out) + ATP + H2O = D-ribose(in) + ADP + phosphate + H(+). Part of the ABC transporter complex RbsABC involved in ribose import. Responsible for energy coupling to the transport system. The protein is Ribose import ATP-binding protein RbsA of Clostridium tetani (strain Massachusetts / E88).